The chain runs to 1197 residues: Protein timeless homolog (1197 aa).

The tract at residues 1 to 309 is required for homodimerization and for interaction with CRY1 and CHEK1; that stretch reads MDLYMMNCEL…GLHNLQNYSS (309 aa). Ser-281 carries the post-translational modification Phosphoserine. Disordered stretches follow at residues 647 to 674 and 943 to 1002; these read STPLPRQQEPEEGDAEEEEEEEEEEELQ and RKKL…SAEN. The segment covering 656-673 has biased composition (acidic residues); the sequence is PEEGDAEEEEEEEEEEEL. The interval 810–949 is DNA-binding domain; the sequence is SHRAPLWSPE…KKRRKKLAPS (140 aa). Positions 963–985 are enriched in acidic residues; that stretch reads QEDPEEEDEHLPEDESEDEESEE. The span at 986-999 shows a compositional bias: low complexity; sequence GLPSGQGQGSSSLS. Positions 997 to 1095 are interaction with PARP1; the sequence is SLSAENLGES…TQLRRVAASL (99 aa). Phosphoserine is present on residues Ser-1071 and Ser-1084. Residues 1079–1197 form a required for nuclear localization region; the sequence is IPAKLSSTQL…KRFQIEDEDD (119 aa). Phosphothreonine is present on Thr-1086. The disordered stretch occupies residues 1088 to 1197; the sequence is LRRVAASLSQ…KRFQIEDEDD (110 aa). Composition is skewed to acidic residues over residues 1099-1109 and 1143-1153; these read ENEEEREEEPE and TEEEATGEEEW. At Ser-1165 the chain carries Phosphoserine.

The protein belongs to the timeless family. In terms of assembly, monomer. Homodimer or homomultimer. Component of the circadian core oscillator, which includes the CRY proteins, CLOCK or NPAS2, ARTNL/BMAL1 or ARTNL2/BMAL2, CSKN1D and/or CSNK1E, TIMELESS, and the PER proteins. Interacts directly with PER2; the interaction with PER2 is via its second PAS domain. Interacts directly with PER1 and PER3. Interacts with CRY1. Interacts with CRY2. Interacts with CHEK1, ATR and ATRIP. Interacts with CLSPN. Interacts (via N-terminus) with TIPIN. The TIMELESS-TIPIN heterodimer binds preferably to guanine-rich quadruplex-forming (G4) DNA structures. Associates with the MCM2-7 complex. Interacts with DNA polymerases alpha, delta and epsilon. Interacts with DDX11; this interaction increases recruitment of both proteins onto chromatin in response to replication stress induction by hydroxyurea. Interacts with PARP1; interaction is direct and independent of poly-ADP-ribose. As to expression, predominantly and robustly expressed in proliferative organs (spleen, thymus, intestine and testis) compared to those more differentiated such as kidney and liver (at protein level). Expressed in all tissues examined including brain, heart, lung, liver, skeletal muscle, kidney, placenta, pancreas, spleen, thymus and testis. Strongly expressed in the suprachiasmatic nucleus (SCN) and pars tuberalis, moderately in the cingulate cortex, pyrimidal cell layer of the piriform cortex, periventricular part of the caudate putamen, and granular layer of the cerebellum, and weakly in the cerebral cortex, gyrus dentatus, hippocampus and thalamic nuclei. In embryonic kidney, expression is highest in regions of active ureteric bud cell branching.

It is found in the nucleus. It localises to the chromosome. In terms of biological role, plays an important role in the control of DNA replication, maintenance of replication fork stability, maintenance of genome stability throughout normal DNA replication, DNA repair and in the regulation of the circadian clock. Required to stabilize replication forks during DNA replication by forming a complex with TIPIN: this complex regulates DNA replication processes under both normal and stress conditions, stabilizes replication forks and influences both CHEK1 phosphorylation and the intra-S phase checkpoint in response to genotoxic stress. During DNA replication, inhibits the CMG complex ATPase activity and activates DNA polymerases catalytic activities, coupling DNA unwinding and DNA synthesis. TIMELESS promotes TIPIN nuclear localization. Plays a role in maintaining processive DNA replication past genomic guanine-rich DNA sequences that form G-quadruplex (G4) structures, possibly together with DDX1. Involved in cell survival after DNA damage or replication stress by promoting DNA repair. In response to double-strand breaks (DSBs), accumulates at DNA damage sites and promotes homologous recombination repair via its interaction with PARP1. May be specifically required for the ATR-CHEK1 pathway in the replication checkpoint induced by hydroxyurea or ultraviolet light. Involved in the determination of period length and in the DNA damage-dependent phase advancing of the circadian clock. Negatively regulates CLOCK|NPAS2-ARTNL/BMAL1|ARTNL2/BMAL2-induced transactivation of PER1 possibly via translocation of PER1 into the nucleus. May also play an important role in epithelial cell morphogenesis and formation of branching tubules. This is Protein timeless homolog from Mus musculus (Mouse).